A 280-amino-acid chain; its full sequence is uncharacterized protein (280 aa).

The active-site Proton donor is Tyr-54. A substrate-binding site is contributed by His-116. Residue 194 to 246 (SPLMQGQLLDHPVLADIAQTYNKSVAQIILRWDLQHGIITIPKSTKEHRIKEN) participates in NADP(+) binding.

The protein belongs to the aldo/keto reductase family.

This is an uncharacterized protein from Bacillus subtilis (strain 168).